A 1551-amino-acid chain; its full sequence is ABC-type transporter phomO (1551 aa).

The next 7 helical transmembrane spans lie at 34-54, 110-130, 139-159, 172-192, 202-222, 314-334, and 358-378; these read LYFEEVVFVLVPSCVFILLAA, CTAGLLVTLHVAGLILLCTTV, SVPASVVAALAFGVVPVLAHF, SSSLLVGLFLCVAVLLRAPLV, GSALVAVEIASLVLQLVLIAV, LGLYALAPVIPRLCLAGFTLA, and GLIGATFLIYTGIAVSTGWYW. The ABC transmembrane type-1 1 domain occupies 326-599; it reads LCLAGFTLAQ…LLQIIPSFGA (274 aa). An N-linked (GlcNAc...) asparagine glycan is attached at N384. The next 4 membrane-spanning stretches (helical) occupy residues 428 to 448, 452 to 472, 535 to 555, and 577 to 597; these read LAYAHELWVAPIETAIGTWML, VGPPGLVVLGIIGVCLGASTY, LIVGTLLSSYSTATLAPVLVF, and LIWISLLASPLIQLLQIIPSF. The ABC transporter 1 domain maps to 645–861; that stretch reads IHNSSFSYTD…VEDENGDVDN (217 aa). N647 carries an N-linked (GlcNAc...) asparagine glycan. 678–685 contributes to the ATP binding site; that stretch reads GPAGCGKS. The N-linked (GlcNAc...) asparagine glycan is linked to N721. The disordered stretch occupies residues 843 to 889; the sequence is YQFPPSQADVEDENGDVDNGAENTRPRESSHTTEAQSGPPEPKSKPT. Transmembrane regions (helical) follow at residues 903–923, 959–979, 1027–1044, and 1137–1157; these read SIGFLNLVLFIGGGIIFAFCL, VLPLIAVAGWVAQLMMLIVPL, LFNTAAALLTGIAQVILI, and LVLNLVVAGLALVVMGAAVGL. The 290-residue stretch at 910-1199 folds into the ABC transmembrane type-1 2 domain; it reads VLFIGGGIIF…LLTAWTSLET (290 aa). An N-linked (GlcNAc...) asparagine glycan is attached at N1179. Residues 1219 to 1228 show a composition bias toward basic and acidic residues; sequence DVLVRPDSLD. Residues 1219–1296 are disordered; it reads DVLVRPDSLD…HEATTITTTS (78 aa). Acidic residues predominate over residues 1259 to 1270; the sequence is YDDDDESDENTD. One can recognise an ABC transporter 2 domain in the interval 1287–1535; it reads HEATTITTTS…SDIFAFFGRS (249 aa). 1323-1330 is a binding site for ATP; sequence GRTGSGKS. N-linked (GlcNAc...) asparagine glycosylation occurs at N1486.

The protein belongs to the ABC transporter superfamily. ABCC family. Conjugate transporter (TC 3.A.1.208) subfamily.

The protein resides in the membrane. Its function is as follows. ABC-type transporter; part of the gene cluster that mediates the biosynthesis of the phomopsins, a group of hexapeptide mycotoxins which infects lupins and causes lupinosis disease in livestock. In Diaporthe leptostromiformis (Lupinosis disease fungus), this protein is ABC-type transporter phomO.